Consider the following 870-residue polypeptide: MGNRGMEELIPLVNKLQDAFSSIGQSCHLDLPQIAVVGGQSAGKSSVLENFVGRDFLPRGSGIVTRRPLILQLIFSKTEYAEFLHCKSKKFTDFDEVRQEIEAETDRVTGTNKGISPVPINLRVYSPHVLNLTLIDLPGITKVPVGDQPPDIEYQIKDMILQFISRESSLILAVTPANMDLANSDALKLAKEVDPQGLRTIGVITKLDLMDEGTDARDVLENKLLPLRRGYIGVVNRSQKDIEGKKDIRAALAAERKFFLSHPAYRHMADRMGTPHLQKTLNQQLTNHIRESLPTLRSKLQSQLLSLEKEVEEYKNFRPDDPTRKTKALLQMVQQFGVDFEKRIEGSGDQVDTLELSGGARINRIFHERFPFELVKMEFDEKDLRREISYAIKNIHGVRTGLFTPDLAFEAIVKKQVVKLKEPCLKCVDLVIQELISTVRQCTSKLSSYPRLREETERIVTTYIREREGRTKDQILLLIDIEQSYINTNHEDFIGFANAQQRSTQLNKKRAIPNQGEILVIRRGWLTINNISLMKGGSKEYWFVLTAESLSWYKDEEEKEKKYMLPLDNLKIRDVEKGFMSNKHVFAIFNTEQRNVYKDLRQIELACDSQEDVDSWKASFLRAGVYPEKDQAENEDGAQENTFSMDPQLERQVETIRNLVDSYVAIINKSIRDLMPKTIMHLMINNTKAFIHHELLAYLYSSADQSSLMEESAEQAQRRDDMLRMYHALKEALNIIGDISTSTVSTPVPPPVDDTWLQNTSGHSPTPQRRPVSSVHPPGRPPAVRGPTPGPPLIPMPVGATSSFSAPPIPSRPGPQSVFANNDPFSAPPQIPSRPARIPPGIPPGVPSRRAPAAPSRPTIIRPAEPSLLD.

A Dynamin-type G domain is found at 28-294 (HLDLPQIAVV…LTNHIRESLP (267 aa)). A G1 motif region spans residues 38–45 (GGQSAGKS). GDP-binding residues include Ser-41, Gly-43, Lys-44, Ser-45, Ser-46, Arg-59, and Gly-60. The G2 motif stretch occupies residues 64–66 (VTR). Residues 136 to 139 (DLPG) form a G3 motif region. The G4 motif stretch occupies residues 205 to 208 (TKLD). GDP contacts are provided by Lys-206, Asp-208, and Asp-211. Residue Tyr-231 is modified to Phosphotyrosine. The interval 235 to 238 (VNRS) is G5 motif. GDP-binding residues include Asn-236, Arg-237, and Gln-239. Lys-299 carries the post-translational modification N6-acetyllysine. In terms of domain architecture, PH spans 519–625 (LVIRRGWLTI…WKASFLRAGV (107 aa)). Phosphotyrosine is present on Tyr-597. Lys-598 is subject to N6-acetyllysine. In terms of domain architecture, GED spans 653–744 (VETIRNLVDS…IIGDISTSTV (92 aa)). The disordered stretch occupies residues 741 to 870 (TSTVSTPVPP…IRPAEPSLLD (130 aa)). At Thr-755 the chain carries Phosphothreonine. Over residues 756–767 (WLQNTSGHSPTP) the composition is skewed to polar residues. Position 764 is a phosphoserine; by CDK1 (Ser-764). The span at 826-846 (SAPPQIPSRPARIPPGIPPGV) shows a compositional bias: pro residues. Residues 847–864 (PSRRAPAAPSRPTIIRPA) are compositionally biased toward low complexity.

This sequence belongs to the TRAFAC class dynamin-like GTPase superfamily. Dynamin/Fzo/YdjA family. In terms of assembly, oligomerizes into a helical polymer that self-assembles around the vesicle membrane, when associated to the menbrane through lipid binding. Interacts with SHANK1 and SHANK2. Interacts with SNX9. Interacts (via C-terminal proline-rich domain (PRD)) with SNX18 (via SH3 domain); this interaction regulates ATG9A and ATG16L1 trafficking from recycling endosomes to sites of autophagosome formation. Interacts with SNX33 (via SH3 domain). Interacts with MYO1E (via SH3 domain). Interacts with PSTPIP1 (via SH3 domain). Interacts with CTNND2. Interacts (via C-terminal proline-rich domain (PRD)) with BIN1 (via SH3 domain); this interaction allows the recruitment of DNM2 to the membrane tubules and inhibits self-assembly-stimulated GTPase activity on the membrane. Interacts with GABARAP, GABARAPL1 and GABARAPL2. Interacts with MAP1LC3B (the lipidate and non-lipidated LC3 form); this interaction mediates recycling endosome scission leading to autophagosome release. Interacts with ITSN1. Interacts (via C-terminal proline-rich domain (PRD)) with SH3BP4 (via SH3 domain); this interaction controls the GTPase activity and is prevented by EGFR-induced tyrosine phosphorylation of either DNM2 or SH3BP4. Interacts with MYOF. May interact with PIK3C3. May be a component of a complex composed of RAB5A (in GDP-bound form), DYN2 and PIK3C3. Interacts with SDC4; this interaction is markedly enhanced at focal ahesion site upon induction of focal adhesions and stress-fiber formation. Interacts with ACTN1. Interacts with CTTN; this interaction stimulates the intrinsic GTPase activity of DNM2 and stabilizes the association of DNM2 and actin filaments; in addition this interaction is stimulated by ligand binding to the receptor, leading to the recruitment of the DNM2-CTTN complex to the sequestered receptor-ligand complex to its internalization. Interacts with NOSTRIN (via SH3 domain); this interaction allows the recruitment of NOS3 to dynamin-positive structures. Interacts with TUBG1; this interaction may participate in centrosome cohesion. Phosphorylation at Ser-848 by GSK3-alpha relieves the inhibition of BIN1 and promotes endocytosis. Phosphorylation at Ser-764 by CDK1 is greatly increased upon mitotic entry. It regulates cytokinesis downstream of calcineurin, and does not affect clathrin-mediated endocytosis. Dephosphorylated by calcineurin/PP2 during cytokinesis in a Ca(2+)- and calmodulin-dependent manner. Phosphorylated on tyrosine residues by EGFR. Phosphorylated on tyrosine residues after activation of SRC. Expressed in most tissues during embryonic development, including the peripheral nervous system although no expression is evident in skeletal muscle or heart.

The protein localises to the cytoplasm. The protein resides in the cytoskeleton. It localises to the cytoplasmic vesicle. Its subcellular location is the clathrin-coated vesicle. It is found in the cell projection. The protein localises to the uropodium. The protein resides in the endosome. It localises to the microtubule organizing center. Its subcellular location is the centrosome. It is found in the centriole. The protein localises to the recycling endosome. The protein resides in the phagocytic cup. It localises to the phagosome membrane. Its subcellular location is the podosome. It is found in the cell junction. The protein localises to the postsynaptic density. The protein resides in the synapse. It localises to the synaptosome. Its subcellular location is the midbody. It is found in the membrane. The protein localises to the clathrin-coated pit. The enzyme catalyses GTP + H2O = GDP + phosphate + H(+). Functionally, catalyzes the hydrolysis of GTP and utilizes this energy to mediate vesicle scission at plasma membrane during endocytosis and filament remodeling at many actin structures during organization of the actin cytoskeleton. Plays an important role in vesicular trafficking processes, namely clathrin-mediated endocytosis (CME), exocytic and clathrin-coated vesicle from the trans-Golgi network, and PDGF stimulated macropinocytosis. During vesicular trafficking process, associates to the membrane, through lipid binding, and self-assembles into ring-like structure through oligomerization to form a helical polymer around the vesicle membrane and leading to vesicle scission. Plays a role in organization of the actin cytoskeleton by mediating arrangement of stress fibers and actin bundles in podocytes. During organization of the actin cytoskeleton, self-assembles into ring-like structure that directly bundles actin filaments to form typical membrane tubules decorated with dynamin spiral polymers. Self-assembly increases GTPase activity and the GTP hydrolysis causes the rapid depolymerization of dynamin spiral polymers, and results in dispersion of actin bundles. Remodels, through its interaction with CTTN, bundled actin filaments in a GTPase-dependent manner and plays a role in orchestrating the global actomyosin cytoskeleton. The interaction with CTTN stabilizes the interaction of DNM2 and actin filaments and stimulates the intrinsic GTPase activity that results in actin filament-barbed ends and increases the sensitivity of filaments in bundles to the actin depolymerizing factor, CFL1. Plays a role in the autophagy process, by participating in the formation of ATG9A vesicles destined for the autophagosomes through its interaction with SNX18, by mediating recycling endosome scission leading to autophagosome release through MAP1LC3B interaction. Also regulates maturation of apoptotic cell corpse-containing phagosomes by recruiting PIK3C3 to the phagosome membrane. Also plays a role in cytokinesis. May participate in centrosome cohesion through its interaction with TUBG1. Plays a role in the regulation of neuron morphology, axon growth and formation of neuronal growth cones. Involved in membrane tubulation. The protein is Dynamin-2 of Mus musculus (Mouse).